The following is a 261-amino-acid chain: Carnitinyl-CoA dehydratase (261 aa).

The Nucleophile role is filled by Glu-111. Glu-131 serves as the catalytic Proton acceptor.

The protein belongs to the enoyl-CoA hydratase/isomerase family.

It carries out the reaction (R)-carnitinyl-CoA = crotonobetainyl-CoA + H2O. It functions in the pathway amine and polyamine metabolism; carnitine metabolism. In terms of biological role, catalyzes the reversible dehydration of L-carnitinyl-CoA to crotonobetainyl-CoA. This Escherichia coli O157:H7 protein is Carnitinyl-CoA dehydratase.